Reading from the N-terminus, the 213-residue chain is Peptide methionine sulfoxide reductase MsrA (213 aa).

Cys-52 is an active-site residue.

It belongs to the MsrA Met sulfoxide reductase family.

It catalyses the reaction L-methionyl-[protein] + [thioredoxin]-disulfide + H2O = L-methionyl-(S)-S-oxide-[protein] + [thioredoxin]-dithiol. It carries out the reaction [thioredoxin]-disulfide + L-methionine + H2O = L-methionine (S)-S-oxide + [thioredoxin]-dithiol. Its function is as follows. Has an important function as a repair enzyme for proteins that have been inactivated by oxidation. Catalyzes the reversible oxidation-reduction of methionine sulfoxide in proteins to methionine. This is Peptide methionine sulfoxide reductase MsrA from Enterobacter sp. (strain 638).